A 286-amino-acid polypeptide reads, in one-letter code: ATP synthase gamma chain (286 aa).

It belongs to the ATPase gamma chain family. In terms of assembly, F-type ATPases have 2 components, CF(1) - the catalytic core - and CF(0) - the membrane proton channel. CF(1) has five subunits: alpha(3), beta(3), gamma(1), delta(1), epsilon(1). CF(0) has three main subunits: a, b and c.

It localises to the cell inner membrane. Produces ATP from ADP in the presence of a proton gradient across the membrane. The gamma chain is believed to be important in regulating ATPase activity and the flow of protons through the CF(0) complex. The sequence is that of ATP synthase gamma chain from Pseudomonas putida (strain GB-1).